Reading from the N-terminus, the 124-residue chain is MATINQLVRKPRVKQVVKSSVPALNACPQKRGVCTRVYTTTPKKPNSALRKVCRVRLTNGFEVTSYIGGEGHNLQEHSVVLIRGGRVKDLPGVRYHTVRGALDCSGVKDRKQSRSKYGVKKPKA.

Residue Asp-89 is modified to 3-methylthioaspartic acid.

Belongs to the universal ribosomal protein uS12 family. As to quaternary structure, part of the 30S ribosomal subunit. Contacts proteins S8 and S17. May interact with IF1 in the 30S initiation complex.

Its function is as follows. With S4 and S5 plays an important role in translational accuracy. Interacts with and stabilizes bases of the 16S rRNA that are involved in tRNA selection in the A site and with the mRNA backbone. Located at the interface of the 30S and 50S subunits, it traverses the body of the 30S subunit contacting proteins on the other side and probably holding the rRNA structure together. The combined cluster of proteins S8, S12 and S17 appears to hold together the shoulder and platform of the 30S subunit. This is Small ribosomal subunit protein uS12 from Tolumonas auensis (strain DSM 9187 / NBRC 110442 / TA 4).